Reading from the N-terminus, the 221-residue chain is Enolase-phosphatase E1 (221 aa).

Positions 9 and 11 each coordinate Mg(2+). Substrate contacts are provided by residues 116 to 117 (SS) and Lys152. A Mg(2+)-binding site is contributed by Asp180.

Belongs to the HAD-like hydrolase superfamily. MasA/MtnC family. As to quaternary structure, monomer. Mg(2+) is required as a cofactor.

The protein localises to the cytoplasm. It is found in the nucleus. The enzyme catalyses 5-methylsulfanyl-2,3-dioxopentyl phosphate + H2O = 1,2-dihydroxy-5-(methylsulfanyl)pent-1-en-3-one + phosphate. The protein operates within amino-acid biosynthesis; L-methionine biosynthesis via salvage pathway; L-methionine from S-methyl-5-thio-alpha-D-ribose 1-phosphate: step 3/6. It participates in amino-acid biosynthesis; L-methionine biosynthesis via salvage pathway; L-methionine from S-methyl-5-thio-alpha-D-ribose 1-phosphate: step 4/6. In terms of biological role, bifunctional enzyme that catalyzes the enolization of 2,3-diketo-5-methylthiopentyl-1-phosphate (DK-MTP-1-P) into the intermediate 2-hydroxy-3-keto-5-methylthiopentenyl-1-phosphate (HK-MTPenyl-1-P), which is then dephosphorylated to form the acireductone 1,2-dihydroxy-3-keto-5-methylthiopentene (DHK-MTPene). This Kluyveromyces lactis (strain ATCC 8585 / CBS 2359 / DSM 70799 / NBRC 1267 / NRRL Y-1140 / WM37) (Yeast) protein is Enolase-phosphatase E1.